The following is a 212-amino-acid chain: Redox-sensing transcriptional repressor Rex (212 aa).

A DNA-binding region (H-T-H motif) is located at residues 17–56 (LYARSLRYLLEEGIHSVSSQELGERINVTAAQIRKDLSYF). 91–96 (GIGLLG) provides a ligand contact to NAD(+).

The protein belongs to the transcriptional regulatory Rex family. In terms of assembly, homodimer.

The protein localises to the cytoplasm. Functionally, modulates transcription in response to changes in cellular NADH/NAD(+) redox state. The protein is Redox-sensing transcriptional repressor Rex of Chloroflexus aggregans (strain MD-66 / DSM 9485).